Reading from the N-terminus, the 502-residue chain is Probable cytosol aminopeptidase (502 aa).

2 residues coordinate Mn(2+): lysine 269 and aspartate 274. Residue lysine 281 is part of the active site. 3 residues coordinate Mn(2+): aspartate 292, aspartate 351, and glutamate 353. The active site involves arginine 355.

Belongs to the peptidase M17 family. The cofactor is Mn(2+).

It is found in the cytoplasm. It catalyses the reaction Release of an N-terminal amino acid, Xaa-|-Yaa-, in which Xaa is preferably Leu, but may be other amino acids including Pro although not Arg or Lys, and Yaa may be Pro. Amino acid amides and methyl esters are also readily hydrolyzed, but rates on arylamides are exceedingly low.. The catalysed reaction is Release of an N-terminal amino acid, preferentially leucine, but not glutamic or aspartic acids.. Functionally, presumably involved in the processing and regular turnover of intracellular proteins. Catalyzes the removal of unsubstituted N-terminal amino acids from various peptides. The sequence is that of Probable cytosol aminopeptidase from Shewanella piezotolerans (strain WP3 / JCM 13877).